The primary structure comprises 380 residues: 4-hydroxy-tetrahydrodipicolinate synthase, chloroplastic (380 aa).

Positions 1–44 (MISPTNLLPARKITPVSNGGAATASPSSPSVAARPRRLPSGLQS) are disordered. Residues 1 to 54 (MISPTNLLPARKITPVSNGGAATASPSSPSVAARPRRLPSGLQSVTGRGKVSLA) constitute a chloroplast transit peptide. Over residues 21 to 33 (AATASPSSPSVAA) the composition is skewed to low complexity. Threonine 123 is a binding site for pyruvate. Tyrosine 209 (proton donor/acceptor) is an active-site residue. The active-site Schiff-base intermediate with substrate is lysine 237. Isoleucine 276 serves as a coordination point for pyruvate.

The protein belongs to the DapA family. As to quaternary structure, tetramer of modified subunits derived from two genes in different combinations.

The protein localises to the plastid. The protein resides in the chloroplast. The catalysed reaction is L-aspartate 4-semialdehyde + pyruvate = (2S,4S)-4-hydroxy-2,3,4,5-tetrahydrodipicolinate + H2O + H(+). It functions in the pathway amino-acid biosynthesis; L-lysine biosynthesis via DAP pathway; (S)-tetrahydrodipicolinate from L-aspartate: step 3/4. Sensitive to lysine inhibition. This inhibition increase in an allosteric manner with increasing concentration of the inhibitor. In terms of biological role, catalyzes the condensation of (S)-aspartate-beta-semialdehyde [(S)-ASA] and pyruvate to 4-hydroxy-tetrahydrodipicolinate (HTPA). In Zea mays (Maize), this protein is 4-hydroxy-tetrahydrodipicolinate synthase, chloroplastic.